A 591-amino-acid chain; its full sequence is Aspartate--tRNA(Asp/Asn) ligase (591 aa).

Position 176 (Glu176) interacts with L-aspartate. Positions 200 to 203 (QLFK) are aspartate. Position 222 (Arg222) interacts with L-aspartate. Residues 222-224 (RDE) and Gln231 contribute to the ATP site. L-aspartate is bound at residue His450. Glu484 contacts ATP. An L-aspartate-binding site is contributed by Arg491. 536-539 (GLDR) is a binding site for ATP.

The protein belongs to the class-II aminoacyl-tRNA synthetase family. Type 1 subfamily. Homodimer.

The protein resides in the cytoplasm. The enzyme catalyses tRNA(Asx) + L-aspartate + ATP = L-aspartyl-tRNA(Asx) + AMP + diphosphate. Its function is as follows. Aspartyl-tRNA synthetase with relaxed tRNA specificity since it is able to aspartylate not only its cognate tRNA(Asp) but also tRNA(Asn). Reaction proceeds in two steps: L-aspartate is first activated by ATP to form Asp-AMP and then transferred to the acceptor end of tRNA(Asp/Asn). In Bacillus anthracis (strain CDC 684 / NRRL 3495), this protein is Aspartate--tRNA(Asp/Asn) ligase.